Here is a 248-residue protein sequence, read N- to C-terminus: Probable phosphatase VFMJ11_A0091 (248 aa).

Zn(2+)-binding residues include H8, H10, H16, H41, E74, H102, H132, D194, and H196.

The protein belongs to the PHP family. Requires Zn(2+) as cofactor.

This chain is Probable phosphatase VFMJ11_A0091, found in Aliivibrio fischeri (strain MJ11) (Vibrio fischeri).